Reading from the N-terminus, the 610-residue chain is UvrABC system protein C (610 aa).

A GIY-YIG domain is found at 16–94; the sequence is NQPGVYRMYN…IKQYLPKYNV (79 aa). The 36-residue stretch at 204-239 folds into the UVR domain; sequence NQVLSILVEKMEQASRELRFEDAAKARDQIQAIRRV.

It belongs to the UvrC family. As to quaternary structure, interacts with UvrB in an incision complex.

It localises to the cytoplasm. Functionally, the UvrABC repair system catalyzes the recognition and processing of DNA lesions. UvrC both incises the 5' and 3' sides of the lesion. The N-terminal half is responsible for the 3' incision and the C-terminal half is responsible for the 5' incision. The chain is UvrABC system protein C from Vibrio cholerae serotype O1 (strain ATCC 39315 / El Tor Inaba N16961).